A 419-amino-acid chain; its full sequence is Isocitrate dehydrogenase [NADP] 1 (419 aa).

Position 105 (Thr105) interacts with NADP(+). D-threo-isocitrate is bound by residues Ser114, Asn116, Arg120, Arg130, and Arg154. A Mg(2+)-binding site is contributed by Asp308. NADP(+)-binding positions include 340-346 (HGTAPKY), Asn353, Tyr392, and Arg396.

This sequence belongs to the isocitrate and isopropylmalate dehydrogenases family. Homodimer. Mg(2+) serves as cofactor. Requires Mn(2+) as cofactor.

It carries out the reaction D-threo-isocitrate + NADP(+) = 2-oxoglutarate + CO2 + NADPH. IDH activity is not significantly affected by monovalent cations. The combined addition of Mn(2+) and another divalent cation results in the decrease of the activity. Catalyzes the oxidative decarboxylation of isocitrate to 2-oxoglutarate and carbon dioxide with the concomitant reduction of NADP(+). Cannot use NAD(+). The chain is Isocitrate dehydrogenase [NADP] 1 from Psychrobacter sp. (strain 13A).